We begin with the raw amino-acid sequence, 311 residues long: Malate dehydrogenase (311 aa).

NAD(+) contacts are provided by residues 7–13 and Asp-34; that span reads GAAGGIG. Substrate is bound by residues Arg-81 and Arg-87. NAD(+) contacts are provided by residues Asn-94 and 117–119; that span reads ITN. Residues Asn-119 and Arg-153 each contribute to the substrate site. His-177 (proton acceptor) is an active-site residue. Met-227 is an NAD(+) binding site.

This sequence belongs to the LDH/MDH superfamily. MDH type 1 family. As to quaternary structure, homodimer.

It carries out the reaction (S)-malate + NAD(+) = oxaloacetate + NADH + H(+). Its function is as follows. Catalyzes the reversible oxidation of malate to oxaloacetate. The chain is Malate dehydrogenase from Shewanella sp. (strain MR-4).